A 325-amino-acid polypeptide reads, in one-letter code: Foldase protein PrsA (325 aa).

The N-terminal stretch at 1–20 is a signal peptide; it reads MKLMNKIIVPVTASALLLGA. C21 is lipidated: N-palmitoyl cysteine. A lipid anchor (S-diacylglycerol cysteine) is attached at C21. The region spanning 139–245 is the PpiC domain; the sequence is ENSKKASHIL…YGYHIIKADK (107 aa). Disordered regions lie at residues 159–202 and 303–325; these read EGLS…KKDG and PDKI…NSGS.

It belongs to the PrsA family.

Its subcellular location is the cell membrane. The catalysed reaction is [protein]-peptidylproline (omega=180) = [protein]-peptidylproline (omega=0). Its function is as follows. Plays a major role in protein secretion by helping the post-translocational extracellular folding of several secreted proteins. This Staphylococcus epidermidis (strain ATCC 12228 / FDA PCI 1200) protein is Foldase protein PrsA.